Reading from the N-terminus, the 32-residue chain is Protamine S4 (32 aa).

The segment at 1–32 (GCKKRKARKRPKCKKARKRPKCKRRKVAKKKC) is disordered.

In terms of tissue distribution, testis.

It localises to the nucleus. The protein localises to the chromosome. Its function is as follows. Protamines substitute for histones in the chromatin of sperm during the haploid phase of spermatogenesis. They compact sperm DNA into a highly condensed, stable and inactive complex. The polypeptide is Protamine S4 (Scyliorhinus canicula (Small-spotted catshark)).